We begin with the raw amino-acid sequence, 402 residues long: Phosphoglycerate kinase (402 aa).

Substrate contacts are provided by residues 24–26 (DFN), arginine 40, 63–66 (HFGR), arginine 122, and arginine 155. ATP-binding positions include lysine 206, glycine 297, glutamate 328, and 357–360 (GGDS).

This sequence belongs to the phosphoglycerate kinase family. As to quaternary structure, monomer.

The protein localises to the cytoplasm. The enzyme catalyses (2R)-3-phosphoglycerate + ATP = (2R)-3-phospho-glyceroyl phosphate + ADP. It functions in the pathway carbohydrate degradation; glycolysis; pyruvate from D-glyceraldehyde 3-phosphate: step 2/5. The protein is Phosphoglycerate kinase of Parasynechococcus marenigrum (strain WH8102).